The sequence spans 236 residues: MNSLSYLNHDQQGFPPPEQALSDPNGLLAVGGDLRPERLLNAYYNGIFPWFNLDDPILWWSPDPRAVFVPGNMKISRSLVKYLKKQDWTYTINHNFEAVTAGCAEPRAGQDGTWISSEIQQAYLSLHQQGYAHSLEVWQDKQLIGGLYGLAIGQVFCGESMFHRATNASKAAMIVLQQHLQRCGFKLIDAQVVNPHLDSLGAKSIKRDDFLRLLTHLRDGEVSIDSWSKAEVSIEL.

It belongs to the L/F-transferase family.

It localises to the cytoplasm. The catalysed reaction is N-terminal L-lysyl-[protein] + L-leucyl-tRNA(Leu) = N-terminal L-leucyl-L-lysyl-[protein] + tRNA(Leu) + H(+). The enzyme catalyses N-terminal L-arginyl-[protein] + L-leucyl-tRNA(Leu) = N-terminal L-leucyl-L-arginyl-[protein] + tRNA(Leu) + H(+). It catalyses the reaction L-phenylalanyl-tRNA(Phe) + an N-terminal L-alpha-aminoacyl-[protein] = an N-terminal L-phenylalanyl-L-alpha-aminoacyl-[protein] + tRNA(Phe). In terms of biological role, functions in the N-end rule pathway of protein degradation where it conjugates Leu, Phe and, less efficiently, Met from aminoacyl-tRNAs to the N-termini of proteins containing an N-terminal arginine or lysine. The chain is Leucyl/phenylalanyl-tRNA--protein transferase from Shewanella halifaxensis (strain HAW-EB4).